Reading from the N-terminus, the 641-residue chain is Tetracycline resistance protein TetS (641 aa).

A tr-type G domain is found at 1-242 (MKIINIGILA…VITSKLFSPT (242 aa)). GTP contacts are provided by residues 10-17 (AHVDAGKT), 74-78 (DTPGH), and 128-131 (NKID).

This sequence belongs to the TRAFAC class translation factor GTPase superfamily. Classic translation factor GTPase family. TetM/TetO subfamily.

Functionally, abolishes the inhibitory effect of tetracyclin on protein synthesis by a non-covalent modification of the ribosomes. The protein is Tetracycline resistance protein TetS (tetS) of Listeria monocytogenes.